The chain runs to 400 residues: uncharacterized protein (400 aa).

This sequence belongs to the mimivirus R640 family.

The protein resides in the virion. This is an uncharacterized protein from Acanthamoeba polyphaga (Amoeba).